The primary structure comprises 438 residues: Choline monooxygenase, chloroplastic (438 aa).

The N-terminal 58 residues, 1 to 58 (MAASATTMLLKYPTTVCGIPNSSANNSTDPSNNIVQIPQTTTTNSPLLKFRTPNKPVN), are a transit peptide targeting the chloroplast. The Rieske domain occupies 121–228 (WQVAGYSDQV…VAVWGPFILI (108 aa)). [2Fe-2S] cluster contacts are provided by C163, H165, C182, and H185. 2 residues coordinate Fe cation: H288 and H293.

Belongs to the choline monooxygenase family. [2Fe-2S] cluster is required as a cofactor. The cofactor is Fe cation. It depends on Mg(2+) as a cofactor. As to expression, expressed in roots and leaves.

Its subcellular location is the plastid. It localises to the chloroplast stroma. The catalysed reaction is choline + 2 reduced [2Fe-2S]-[ferredoxin] + O2 + 2 H(+) = betaine aldehyde hydrate + 2 oxidized [2Fe-2S]-[ferredoxin] + H2O. It functions in the pathway amine and polyamine biosynthesis; betaine biosynthesis via choline pathway; betaine aldehyde from choline (monooxygenase route): step 1/1. Functionally, catalyzes the first step of the osmoprotectant glycine betaine synthesis. This is Choline monooxygenase, chloroplastic (CMO) from Atriplex hortensis (Mountain spinach).